The sequence spans 107 residues: Protein HitA (107 aa).

Residues 5–107 (IFCKIAAKEI…LHIHIMGTPV (103 aa)) enclose the HIT domain. The Histidine triad motif motif lies at 97–101 (HLHIH).

This Neisseria gonorrhoeae protein is Protein HitA (hitA).